The sequence spans 21 residues: APGDLLWSDEFDGAAGSAPNP.

The segment at 1–21 is disordered; that stretch reads APGDLLWSDEFDGAAGSAPNP.

It carries out the reaction Hydrolysis of (1-&gt;3)-beta-D-glucosidic linkages in (1-&gt;3)-beta-D-glucans.. In Papiliotrema laurentii (Cryptococcus laurentii), this protein is Glucan endo-1,3-beta-glucosidase 2.